Here is a 94-residue protein sequence, read N- to C-terminus: Large ribosomal subunit protein uL23 (94 aa).

It belongs to the universal ribosomal protein uL23 family. In terms of assembly, part of the 50S ribosomal subunit. Contacts protein L29, and trigger factor when it is bound to the ribosome.

Its function is as follows. One of the early assembly proteins it binds 23S rRNA. One of the proteins that surrounds the polypeptide exit tunnel on the outside of the ribosome. Forms the main docking site for trigger factor binding to the ribosome. The sequence is that of Large ribosomal subunit protein uL23 from Ligilactobacillus salivarius (strain UCC118) (Lactobacillus salivarius).